A 269-amino-acid polypeptide reads, in one-letter code: Shikimate dehydrogenase (NADP(+)) (269 aa).

Shikimate is bound by residues 17–19 and T64; that span reads SKS. The active-site Proton acceptor is K68. E80 is an NADP(+) binding site. Positions 89 and 105 each coordinate shikimate. NADP(+) contacts are provided by residues 130 to 134, 154 to 159, and M213; these read GAGGA and NRTHAK. Y215 lines the shikimate pocket. G237 is a binding site for NADP(+).

Belongs to the shikimate dehydrogenase family. In terms of assembly, homodimer.

It carries out the reaction shikimate + NADP(+) = 3-dehydroshikimate + NADPH + H(+). The protein operates within metabolic intermediate biosynthesis; chorismate biosynthesis; chorismate from D-erythrose 4-phosphate and phosphoenolpyruvate: step 4/7. Involved in the biosynthesis of the chorismate, which leads to the biosynthesis of aromatic amino acids. Catalyzes the reversible NADPH linked reduction of 3-dehydroshikimate (DHSA) to yield shikimate (SA). This is Shikimate dehydrogenase (NADP(+)) from Neisseria cinerea.